Reading from the N-terminus, the 211-residue chain is N,O-diacetylmuramidase (211 aa).

Residues aspartate 6 and glutamate 100 contribute to the active site. An intrachain disulfide couples cysteine 108 to cysteine 147.

The protein belongs to the glycosyl hydrolase 25 family.

The protein resides in the secreted. The protein localises to the extracellular space. It catalyses the reaction Hydrolysis of (1-&gt;4)-beta-linkages between N-acetylmuramic acid and N-acetyl-D-glucosamine residues in a peptidoglycan and between N-acetyl-D-glucosamine residues in chitodextrins.. In terms of biological role, this enzyme has both lysozyme (acetylmuramidase) and diacetylmuramidase activities. The chain is N,O-diacetylmuramidase from Chalaropsis sp.